Reading from the N-terminus, the 150-residue chain is Deoxyuridine 5'-triphosphate nucleotidohydrolase (150 aa).

Substrate contacts are provided by residues 70 to 72 (RSG), Asn-82, 86 to 88 (LID), and Met-96.

This sequence belongs to the dUTPase family. It depends on Mg(2+) as a cofactor.

It carries out the reaction dUTP + H2O = dUMP + diphosphate + H(+). The protein operates within pyrimidine metabolism; dUMP biosynthesis; dUMP from dCTP (dUTP route): step 2/2. Functionally, this enzyme is involved in nucleotide metabolism: it produces dUMP, the immediate precursor of thymidine nucleotides and it decreases the intracellular concentration of dUTP so that uracil cannot be incorporated into DNA. In Baumannia cicadellinicola subsp. Homalodisca coagulata, this protein is Deoxyuridine 5'-triphosphate nucleotidohydrolase.